The sequence spans 203 residues: A-type ATP synthase subunit E (203 aa).

Belongs to the V-ATPase E subunit family. As to quaternary structure, might form a homodimer. Interacts with subunit H via residues 41-60. The A-type ATPase is composed of subunits A(3), B(3), C, D, E(1 or 2), F, H(2), I and K(x).

Its subcellular location is the cell membrane. Component of the A-type ATP synthase that produces ATP from ADP in the presence of a proton gradient across the membrane. The chain is A-type ATP synthase subunit E from Methanocaldococcus jannaschii (strain ATCC 43067 / DSM 2661 / JAL-1 / JCM 10045 / NBRC 100440) (Methanococcus jannaschii).